Reading from the N-terminus, the 289-residue chain is Protein shisa-2 homolog (289 aa).

A signal peptide spans M1–A27. The Extracellular segment spans residues S28–S104. Positions G81–D102 are disordered. A helical transmembrane segment spans residues A105–L125. The Cytoplasmic segment spans residues G126–V289. The tract at residues P162 to T198 is disordered. The span at S163–A191 shows a compositional bias: low complexity.

It belongs to the shisa family.

The protein localises to the endoplasmic reticulum membrane. Its function is as follows. Plays an essential role in the maturation of presomitic mesoderm cells by individual attenuation of both FGF and WNT signaling. In Bos taurus (Bovine), this protein is Protein shisa-2 homolog (SHISA2).